Here is a 121-residue protein sequence, read N- to C-terminus: HTH-type transcriptional regulator Rv1152 (121 aa).

An HTH gntR-type domain is found at 15 to 83; the sequence is KPLFDQLRTQ…GRFGTFISRF (69 aa). Positions 43-62 form a DNA-binding region, H-T-H motif; the sequence is VRDLAGQLGVAANTVARAYR.

The protein resides in the cytoplasm. Its subcellular location is the secreted. The protein localises to the cell wall. Its function is as follows. Transcriptional regulator that modulates resistance to vancomycin and aminoglycosides. Negatively regulates the expression of several genes responsive to vancomycin, resulting in decreased susceptibility of bacteria to vancomycin. Negatively regulates the expression of genes encoding the ribosome binding protein Hsp, the small subunit of sulfate adenylyltransferase CysD, the L-lysine-epsilon aminotransferase LAT and the protease HtpX. Also modulates purine metabolism and aminoglycoside antibiotic resistance. Negatively regulates the expression of purine metabolism-related genes and the accumulation of purine metabolites, which affects aminoglycoside antibiotic resistance. In Mycobacterium tuberculosis (strain ATCC 25618 / H37Rv), this protein is HTH-type transcriptional regulator Rv1152.